The following is a 391-amino-acid chain: Testis-expressed protein 9 (391 aa).

2 disordered regions span residues 1–31 and 65–85; these read MAGRSLCLTRSSVPGTPFPPPVQQPSTPGPD and QEVRSRPVSTQMKSCDDEDDY. A coiled-coil region spans residues 188 to 351; it reads IGTEAQIRFL…EKQKGELMIG (164 aa).

The protein localises to the cytoplasm. It is found in the cytoskeleton. Its subcellular location is the microtubule organizing center. It localises to the centrosome. The protein resides in the centriolar satellite. The polypeptide is Testis-expressed protein 9 (TEX9) (Homo sapiens (Human)).